We begin with the raw amino-acid sequence, 161 residues long: Protein-export protein SecB (161 aa).

It belongs to the SecB family. As to quaternary structure, homotetramer, a dimer of dimers. One homotetramer interacts with 1 SecA dimer.

It localises to the cytoplasm. One of the proteins required for the normal export of preproteins out of the cell cytoplasm. It is a molecular chaperone that binds to a subset of precursor proteins, maintaining them in a translocation-competent state. It also specifically binds to its receptor SecA. The sequence is that of Protein-export protein SecB from Shewanella sp. (strain ANA-3).